Here is a 984-residue protein sequence, read N- to C-terminus: Ephrin type-B receptor 1 (984 aa).

The Eph LBD domain maps to 1 to 182 (ETLMDTRTAT…FFKKCPSVVQ (182 aa)). Residues 1 to 541 (ETLMDTRTAT…KSELREQLPL (541 aa)) are Extracellular-facing. 2 Fibronectin type-III domains span residues 303-413 (VPSG…TNQA) and 414-528 (APST…TLTD). Residues asparagine 315, asparagine 407, and asparagine 480 are each glycosylated (N-linked (GlcNAc...) asparagine). Residues 542 to 562 (IAGSAAAGVVFIVSLVAISIV) traverse the membrane as a helical segment. At 563–984 (CSRKRAYSKE…QMSQSPTSMA (422 aa)) the chain is on the cytoplasmic side. The Protein kinase domain maps to 619 to 882 (VKIEEVIGAG…EIVNTLDKMI (264 aa)). ATP is bound by residues 625–633 (IGAGEFGEV) and lysine 651. Aspartate 744 acts as the Proton acceptor in catalysis. Residues 911-975 (TAFTSVEDWL…LNSIQSMRVQ (65 aa)) form the SAM domain. The PDZ-binding signature appears at 982-984 (SMA).

This sequence belongs to the protein kinase superfamily. Tyr protein kinase family. Ephrin receptor subfamily. Heterotetramer upon binding of the ligand. The heterotetramer is composed of an ephrin dimer and a receptor dimer. Oligomerization is probably required to induce biological responses. Post-translationally, phosphorylated. Autophosphorylation is stimulated by ligands. In terms of tissue distribution, expressed at high levels in the 10-day embryo, and in adult brain, lung, heart and skeletal muscle. Low levels of expression detected in all other adult tissues tested.

It localises to the cell membrane. The protein resides in the early endosome membrane. Its subcellular location is the cell projection. The protein localises to the dendrite. It catalyses the reaction L-tyrosyl-[protein] + ATP = O-phospho-L-tyrosyl-[protein] + ADP + H(+). In terms of biological role, receptor tyrosine kinase which binds promiscuously transmembrane ephrin-B family ligands residing on adjacent cells, leading to contact-dependent bidirectional signaling into neighboring cells. The signaling pathway downstream of the receptor is referred to as forward signaling while the signaling pathway downstream of the ephrin ligand is referred to as reverse signaling. May play a role in axon guidance during nervous system development. May also play an important redundant role with other ephrin-B receptors in development and maturation of dendritic spines and synapse formation. More generally, may play a role in targeted cell migration and adhesion. Upon activation by ephrin-B ligands activates the MAPK/ERK and the JNK signaling cascades to regulate cell migration and adhesion respectively. This Gallus gallus (Chicken) protein is Ephrin type-B receptor 1 (EPHB1).